Consider the following 217-residue polypeptide: MYLFHLCLVFACVPCPTFQASKLCLGWLWGMDIDPYKEFGSSYQLLNFLPLDFFPDLNALVDTATALYEEELTGREHCSPHHTAIRQALVCWDELTKLIAWMSSNITSEQVRTIIVNHVNDTWGLKVRQSLWFHLSCLTFGQHTVQEFLVSFVVWIRTPAPYRPPNAPILSTLPEHTVIRRGGARASRSPRRRTPSPRRRRSQSPRRRRSQSPSANC.

An N-terminal signal peptide occupies residues 1-19 (MYLFHLCLVFACVPCPTFQ). The tract at residues 26-28 (GWL) is HBEAG. Positions 180-217 (RRGGARASRSPRRRTPSPRRRRSQSPRRRRSQSPSANC) are disordered. Basic residues predominate over residues 188–210 (RSPRRRTPSPRRRRSQSPRRRRS). The stretch at 189 to 195 (SPRRRTP) is one 1; half-length repeat. Positions 189-211 (SPRRRTPSPRRRRSQSPRRRRSQ) are 3 X 8 AA repeats of S-P-R-R-R-R-S-Q. Positions 189 to 217 (SPRRRTPSPRRRRSQSPRRRRSQSPSANC) are excised as a propeptide. A run of 2 repeats spans residues 196–203 (SPRRRRSQ) and 204–211 (SPRRRRSQ).

This sequence belongs to the orthohepadnavirus precore antigen family. As to quaternary structure, homodimerizes. Phosphorylated. In terms of processing, cleaved by host furin.

The protein localises to the secreted. It is found in the host nucleus. In terms of biological role, may regulate immune response to the intracellular capsid in acting as a T-cell tolerogen, by having an immunoregulatory effect which prevents destruction of infected cells by cytotoxic T-cells. This immune regulation may predispose to chronicity during perinatal infections and prevent severe liver injury during adult infections. The chain is External core antigen from Marmota monax (Woodchuck).